We begin with the raw amino-acid sequence, 491 residues long: FAD-dependent monooxygenase cle3 (491 aa).

E55, G69, R128, D330, and A343 together coordinate FAD. N-linked (GlcNAc...) asparagine glycosylation occurs at N380. A helical transmembrane segment spans residues 462–482 (STVVWTSLGILGLVVFLFLLF).

This sequence belongs to the paxM FAD-dependent monooxygenase family. The cofactor is FAD.

The protein localises to the membrane. It participates in secondary metabolite biosynthesis; terpenoid biosynthesis. Functionally, FAD-dependent monooxygenase; part of the cluster A that mediates the biosynthesis of chevalone E and its oxidized derivatives that possess a unique five-membered lactone ring and can synergistically enhance the cytotoxicity of doxorubicin (DOX) in breast cancer cells. Within the pathway, cle3 takes part to the biosynthesis of the molecular scaffold by catalyzing the formation of an (S)-epoxide ring at the terminal olefin of the geranylgeranyl group. The molecular scaffold is commonly biosynthesized by a series of enzymes including the non-reducing polyketide synthase (NR-PKS) cle1 that produces the alpha-pyrone triacetic acid lactone (TAL); The membrane-bound prenyltransferase cle5 that accepts TAL as its substrate to perform a C-3 geranylgeranylation reaction, in which the pathway-dedicated GGPS cle6 is required to provide GGPP, the other substrate of cle5; the FAD-dependent monooxygenase Cle3 that forms an (S)-epoxide ring at the terminal olefin of the geranylgeranyl group; and the terpene cyclase Cle7 that catalyzes the cyclization of the prenyl group that yields the pentacyclic pathway intermediate chevalone E. Chevalone E can derivatize into seven new oxidized analogs by the cytochrome P450 monooxygenases cle2 (acting at C-20) and cle4 (acting at C-11 and C-12). The protein is FAD-dependent monooxygenase cle3 of Aspergillus versicolor.